Here is a 239-residue protein sequence, read N- to C-terminus: Myogenic factor 6 (239 aa).

Residues 28 to 64 (HLDMSGVSPLYNGNDSPLSPGQDNVPSETGGESSGDE) are disordered. Positions 38–58 (YNGNDSPLSPGQDNVPSETGG) are enriched in polar residues. The region spanning 96-147 (DRRKAATLRERRRLKKINEAFDALKRKTVANPNQRLPKVEILRSAISYIERL) is the bHLH domain. The interval 155–189 (DEQERSQSGASDTRNDKEQNRPSGGDYRWKKASNT) is disordered.

Efficient DNA binding requires dimerization with another bHLH protein.

It is found in the nucleus. In terms of biological role, involved in muscle differentiation (myogenic factor). Induces fibroblasts to differentiate into myoblasts. Probable sequence specific DNA-binding protein. The polypeptide is Myogenic factor 6 (myf6) (Takifugu rubripes (Japanese pufferfish)).